Reading from the N-terminus, the 126-residue chain is Aspartate 1-decarboxylase (126 aa).

Ser25 functions as the Schiff-base intermediate with substrate; via pyruvic acid in the catalytic mechanism. At Ser25 the chain carries Pyruvic acid (Ser). Thr57 contributes to the substrate binding site. Tyr58 (proton donor) is an active-site residue. 73–75 serves as a coordination point for substrate; it reads GAA.

The protein belongs to the PanD family. As to quaternary structure, heterooctamer of four alpha and four beta subunits. Pyruvate serves as cofactor. In terms of processing, is synthesized initially as an inactive proenzyme, which is activated by self-cleavage at a specific serine bond to produce a beta-subunit with a hydroxyl group at its C-terminus and an alpha-subunit with a pyruvoyl group at its N-terminus.

The protein localises to the cytoplasm. It catalyses the reaction L-aspartate + H(+) = beta-alanine + CO2. It functions in the pathway cofactor biosynthesis; (R)-pantothenate biosynthesis; beta-alanine from L-aspartate: step 1/1. Catalyzes the pyruvoyl-dependent decarboxylation of aspartate to produce beta-alanine. This Alcanivorax borkumensis (strain ATCC 700651 / DSM 11573 / NCIMB 13689 / SK2) protein is Aspartate 1-decarboxylase.